A 225-amino-acid chain; its full sequence is UPF0173 metal-dependent hydrolase Aflv_0488 (225 aa).

This sequence belongs to the UPF0173 family.

The polypeptide is UPF0173 metal-dependent hydrolase Aflv_0488 (Anoxybacillus flavithermus (strain DSM 21510 / WK1)).